A 141-amino-acid chain; its full sequence is Large ribosomal subunit protein uL11 (141 aa).

The protein belongs to the universal ribosomal protein uL11 family. In terms of assembly, part of the ribosomal stalk of the 50S ribosomal subunit. Interacts with L10 and the large rRNA to form the base of the stalk. L10 forms an elongated spine to which L12 dimers bind in a sequential fashion forming a multimeric L10(L12)X complex. Post-translationally, one or more lysine residues are methylated.

Its function is as follows. Forms part of the ribosomal stalk which helps the ribosome interact with GTP-bound translation factors. This chain is Large ribosomal subunit protein uL11, found in Aster yellows witches'-broom phytoplasma (strain AYWB).